Here is a 123-residue protein sequence, read N- to C-terminus: Large ribosomal subunit protein bL12 (123 aa).

The protein belongs to the bacterial ribosomal protein bL12 family. As to quaternary structure, homodimer. Part of the ribosomal stalk of the 50S ribosomal subunit. Forms a multimeric L10(L12)X complex, where L10 forms an elongated spine to which 2 to 4 L12 dimers bind in a sequential fashion. Binds GTP-bound translation factors.

In terms of biological role, forms part of the ribosomal stalk which helps the ribosome interact with GTP-bound translation factors. Is thus essential for accurate translation. The protein is Large ribosomal subunit protein bL12 of Dehalococcoides mccartyi (strain ATCC BAA-2100 / JCM 16839 / KCTC 5957 / BAV1).